A 530-amino-acid chain; its full sequence is ATP-dependent RNA helicase DBP3 (530 aa).

Residues 1–20 (MSKDEIKDKKRKSEEYEVVD) are compositionally biased toward basic and acidic residues. Residues 1 to 77 (MSKDEIKDKK…VASVSTSSTV (77 aa)) form a disordered region. Residues 19–58 (VDKKKHKKDKKDKKEKKDKKEKKLKKDKKDKKDKKETKSE) adopt a coiled-coil conformation. The segment covering 21 to 50 (KKKHKKDKKDKKEKKDKKEKKLKKDKKDKK) has biased composition (basic residues). Positions 67–77 (SVASVSTSSTV) are enriched in low complexity. A Q motif motif is present at residues 117 to 143 (LSFSHISLDSRIQAEISKFPKPTPIQA). Residues 146 to 322 (WPYLLAGKDV…STFMNSPIKV (177 aa)) form the Helicase ATP-binding domain. 159-166 (AETGSGKT) serves as a coordination point for ATP. The DEAD box motif lies at 269 to 272 (DEAD). One can recognise a Helicase C-terminal domain in the interval 351–500 (KLLELLKKYQ…PVPEELKKFG (150 aa)).

This sequence belongs to the DEAD box helicase family. DDX5/DBP2 subfamily.

The protein localises to the nucleus. It localises to the nucleolus. The catalysed reaction is ATP + H2O = ADP + phosphate + H(+). Functionally, ATP-dependent RNA helicase required for 60S ribosomal subunit synthesis. Involved in efficient pre-rRNA processing, predominantly at site A3, which is necessary for the normal formation of 25S and 5.8S rRNAs. This chain is ATP-dependent RNA helicase DBP3 (DBP3), found in Vanderwaltozyma polyspora (strain ATCC 22028 / DSM 70294 / BCRC 21397 / CBS 2163 / NBRC 10782 / NRRL Y-8283 / UCD 57-17) (Kluyveromyces polysporus).